Here is a 164-residue protein sequence, read N- to C-terminus: Transcription antitermination protein NusB (164 aa).

The tract at residues 144–164 (KNGRGLIDHTPPRAAKTDAKS) is disordered. The span at 149-164 (LIDHTPPRAAKTDAKS) shows a compositional bias: basic and acidic residues.

Belongs to the NusB family.

Involved in transcription antitermination. Required for transcription of ribosomal RNA (rRNA) genes. Binds specifically to the boxA antiterminator sequence of the ribosomal RNA (rrn) operons. The chain is Transcription antitermination protein NusB from Chlorobium phaeovibrioides (strain DSM 265 / 1930) (Prosthecochloris vibrioformis (strain DSM 265)).